The chain runs to 398 residues: Bifunctional enzyme IspD/IspF (398 aa).

A 2-C-methyl-D-erythritol 4-phosphate cytidylyltransferase region spans residues 1–234 (MANSRRTAAI…SRLAALLGDI (234 aa)). The tract at residues 235-398 (RTGTGYDVHA…LPWGPNGLSG (164 aa)) is 2-C-methyl-D-erythritol 2,4-cyclodiphosphate synthase. D241 and H243 together coordinate a divalent metal cation. Residues 241–243 (DVH) and 267–268 (HS) each bind 4-CDP-2-C-methyl-D-erythritol 2-phosphate. H275 is an a divalent metal cation binding site. Residues 289–291 (DIG), 365–368 (TTSE), F372, and R375 each bind 4-CDP-2-C-methyl-D-erythritol 2-phosphate.

The protein in the N-terminal section; belongs to the IspD/TarI cytidylyltransferase family. IspD subfamily. It in the C-terminal section; belongs to the IspF family. Requires a divalent metal cation as cofactor.

It catalyses the reaction 2-C-methyl-D-erythritol 4-phosphate + CTP + H(+) = 4-CDP-2-C-methyl-D-erythritol + diphosphate. The enzyme catalyses 4-CDP-2-C-methyl-D-erythritol 2-phosphate = 2-C-methyl-D-erythritol 2,4-cyclic diphosphate + CMP. It functions in the pathway isoprenoid biosynthesis; isopentenyl diphosphate biosynthesis via DXP pathway; isopentenyl diphosphate from 1-deoxy-D-xylulose 5-phosphate: step 2/6. It participates in isoprenoid biosynthesis; isopentenyl diphosphate biosynthesis via DXP pathway; isopentenyl diphosphate from 1-deoxy-D-xylulose 5-phosphate: step 4/6. Its function is as follows. Bifunctional enzyme that catalyzes the formation of 4-diphosphocytidyl-2-C-methyl-D-erythritol from CTP and 2-C-methyl-D-erythritol 4-phosphate (MEP) (IspD), and catalyzes the conversion of 4-diphosphocytidyl-2-C-methyl-D-erythritol 2-phosphate (CDP-ME2P) to 2-C-methyl-D-erythritol 2,4-cyclodiphosphate (ME-CPP) with a corresponding release of cytidine 5-monophosphate (CMP) (IspF). This is Bifunctional enzyme IspD/IspF from Rhodopseudomonas palustris (strain BisA53).